The primary structure comprises 168 residues: MAEAFRGEYNQKVDAKARVSIPAPFRRVIEAGDPKFSGGRSSFVLVYGGDRSYVECYTISEMERIEERIRSLPMGTPKRRYLERNMITLALNMELDEDGRIVLPPKGREKLGISPDELKGGTEATFAGTLNKFQIWKADTYAAELAAEEEVLLPPGADMLSLLEETGL.

2 SpoVT-AbrB domains span residues 8–51 (EYNQ…GGDR) and 90–140 (ALNM…KADT).

This sequence belongs to the MraZ family. In terms of assembly, forms oligomers.

It is found in the cytoplasm. It localises to the nucleoid. The polypeptide is Transcriptional regulator MraZ (Cereibacter sphaeroides (strain ATCC 17029 / ATH 2.4.9) (Rhodobacter sphaeroides)).